A 207-amino-acid polypeptide reads, in one-letter code: LexA repressor (207 aa).

The H-T-H motif DNA-binding region spans 29 to 49 (VREICSAVDLSSTSTVHGHLA). Residues Ser-128 and Lys-166 each act as for autocatalytic cleavage activity in the active site.

The protein belongs to the peptidase S24 family. In terms of assembly, homodimer.

The enzyme catalyses Hydrolysis of Ala-|-Gly bond in repressor LexA.. Represses a number of genes involved in the response to DNA damage (SOS response), including recA and lexA. In the presence of single-stranded DNA, RecA interacts with LexA causing an autocatalytic cleavage which disrupts the DNA-binding part of LexA, leading to derepression of the SOS regulon and eventually DNA repair. In Lactobacillus johnsonii (strain CNCM I-12250 / La1 / NCC 533), this protein is LexA repressor.